Consider the following 1442-residue polypeptide: Cleavage and polyadenylation specificity factor subunit 1 (1442 aa).

It belongs to the CPSF1 family. In terms of assembly, component of the CPSF complex, at least composed of CPSF160, CPSF100, CPSF73-I, CPSF73-II, CPSF30, FY and FIPS5. Forms a complex with cleavage and polyadenylation specificity factor (CPSF) subunits FY, CPSF30, CPSF73-I, CPSF 73-II and CPSF100.

The protein localises to the nucleus. In terms of biological role, CPSF plays a key role in pre-mRNA 3'-end formation, recognizing the AAUAAA signal sequence and interacting with poly(A)polymerase and other factors to bring about cleavage and poly(A) addition. This subunit is involved in the RNA recognition step of the polyadenylation reaction. The polypeptide is Cleavage and polyadenylation specificity factor subunit 1 (CPSF160) (Arabidopsis thaliana (Mouse-ear cress)).